The following is a 233-amino-acid chain: MKMKLVTAAVMGLAMSTAMAATDATSLATDKDKLSYSIGADLGKNFKNQGIDVNPEAMAKGMQDAMSGAQLALTEQQMKDVLNKFQKDLMAKRTAEFNKKADENKVKGEAFLTENKNKPGVVVLPSGLQYKVINAGNGVKPGKSDTVTVEYTGRLIDGTVFDSTEKTGKPATFQVSQVIPGWTEALQLMPAGSTWEIYVPSGLAYGPRSVGGPIGPNETLIFKIHLISVKKSS.

The N-terminal stretch at 1–20 (MKMKLVTAAVMGLAMSTAMA) is a signal peptide. The 90-residue stretch at 144-233 (SDTVTVEYTG…IHLISVKKSS (90 aa)) folds into the PPIase FKBP-type domain.

This sequence belongs to the FKBP-type PPIase family.

It is found in the cell outer membrane. The enzyme catalyses [protein]-peptidylproline (omega=180) = [protein]-peptidylproline (omega=0). Essential virulence factor associated with macrophage infectivity. Exhibits PPIase activity. In Legionella pneumophila (strain Corby), this protein is Outer membrane protein MIP (mip).